Here is a 251-residue protein sequence, read N- to C-terminus: Carbohydrate deacetylase (251 aa).

2 residues coordinate Mg(2+): His-59 and His-122.

The protein belongs to the YdjC deacetylase family. As to quaternary structure, homodimer. Mg(2+) is required as a cofactor.

In terms of biological role, probably catalyzes the deacetylation of acetylated carbohydrates an important step in the degradation of oligosaccharides. In Vibrio campbellii (strain ATCC BAA-1116), this protein is Carbohydrate deacetylase.